The following is an 862-amino-acid chain: Short transient receptor potential channel 7 (862 aa).

Positions 1–21 (MLGSNTFKNMQRRHTTLREKG) are disordered. Residues 1–351 (MLGSNTFKNM…GLRQQSIAVK (351 aa)) are Cytoplasmic-facing. Over residues 10-21 (MQRRHTTLREKG) the composition is skewed to basic residues. Thr-15 carries the phosphothreonine; by PKG/PRKG1 modification. ANK repeat units lie at residues 42–71 (PEEERFLDSAEYGNIPVVRKMLEESKTLNF), 77–106 (MGQNALQLAVGNEHLEVTELLLKKENLARV), 108–134 (DALLLAISKGYVRIVEAILSHPAFAQG), and 163–192 (HDITPIILAAHCQEYEIVHILLLKGARIER). Residues 352–372 (FLAVFGVSIGLPFLAIAYWIA) form a helical membrane-spanning segment. Residues 373–383 (PCSKLGQTLRS) lie on the Extracellular side of the membrane. Residues 384–404 (PFMKFVAHAVSFTIFLGLLVV) form a helical membrane-spanning segment. Residues 405–465 (NASDRFEGVK…KEIWEEGPRE (61 aa)) lie on the Cytoplasmic side of the membrane. Residues 466–486 (YVLHLWNLLDFGMLSIFVASF) form a helical membrane-spanning segment. The Extracellular portion of the chain corresponds to 487-537 (TARFMAFLKASEAQLYVDQYVQDVTLHNVSLPPEVAYFTYARDKWWPSDPQ). N-linked (GlcNAc...) asparagine glycosylation is present at Asn-514. The chain crosses the membrane as a helical span at residues 538-558 (IISEGLYAIAVVLSFSRIAYI). The Cytoplasmic segment spans residues 559-581 (LPANESFGPLQISLGRTVKDIFK). The chain crosses the membrane as a helical span at residues 582–602 (FMVIFIMVFVAFMIGMFNLYS). Residues 603–651 (YYRGAKYNPAFTTVEESFKTLFWSIFGLSEVISVVLKYDHKFIENIGYV) are Extracellular-facing. Residues 652–672 (LYGVYNVTMVVVLLNMLIAMI) form a helical membrane-spanning segment. Topologically, residues 673–862 (NNSYQEIEED…HLRVNQGKDI (190 aa)) are cytoplasmic.

Belongs to the transient receptor (TC 1.A.4) family. STrpC subfamily. TRPC7 sub-subfamily. Interacts with MX1 and RNF24. Interacts (via ANK-repeat domains) with PRKG1. Post-translationally, phosphorylation by PRKG1 at Thr-15 negatively regulates TRPC7 activity.

Its subcellular location is the cell membrane. The protein localises to the nucleus envelope. The catalysed reaction is Ca(2+)(in) = Ca(2+)(out). Functionally, forms a receptor-activated non-selective calcium permeant cation channel. Probably is operated by a phosphatidylinositol second messenger system activated by receptor tyrosine kinases or G-protein coupled receptors. Activated by diacylglycerol (DAG). May also be activated by intracellular calcium store depletion. The polypeptide is Short transient receptor potential channel 7 (Trpc7) (Mus musculus (Mouse)).